The sequence spans 216 residues: Large ribosomal subunit protein uL24m (216 aa).

Residues 1–9 (MRLTALLSM) constitute a mitochondrion transit peptide. The region spanning 56 to 89 (VVRGDTVEVLSGKEKGKQGKVAQVIRARNWVILE) is the KOW domain. Positions 167–186 (PQQWKDGPKDTSPEDTLQKT) are disordered.

Belongs to the universal ribosomal protein uL24 family. As to quaternary structure, component of the mitochondrial ribosome large subunit (39S) which comprises a 16S rRNA and about 50 distinct proteins.

It is found in the mitochondrion. The sequence is that of Large ribosomal subunit protein uL24m (mrpl24) from Danio rerio (Zebrafish).